The primary structure comprises 270 residues: Hydroxyethylthiazole kinase (270 aa).

Methionine 47 is a substrate binding site. ATP is bound by residues arginine 123 and threonine 169. Position 196 (glycine 196) interacts with substrate.

It belongs to the Thz kinase family. Mg(2+) serves as cofactor.

It catalyses the reaction 5-(2-hydroxyethyl)-4-methylthiazole + ATP = 4-methyl-5-(2-phosphooxyethyl)-thiazole + ADP + H(+). It functions in the pathway cofactor biosynthesis; thiamine diphosphate biosynthesis; 4-methyl-5-(2-phosphoethyl)-thiazole from 5-(2-hydroxyethyl)-4-methylthiazole: step 1/1. Catalyzes the phosphorylation of the hydroxyl group of 4-methyl-5-beta-hydroxyethylthiazole (THZ). The polypeptide is Hydroxyethylthiazole kinase (Roseiflexus castenholzii (strain DSM 13941 / HLO8)).